The sequence spans 437 residues: Adenylosuccinate synthetase (437 aa).

GTP is bound by residues 12-18 (GDEGKGK) and 40-42 (GHT). Asp-13 functions as the Proton acceptor in the catalytic mechanism. Residues Asp-13 and Gly-40 each contribute to the Mg(2+) site. Residues 13 to 16 (DEGK), 38 to 41 (NAGH), Thr-128, Arg-142, Gln-223, Thr-238, and Arg-302 each bind IMP. Catalysis depends on His-41, which acts as the Proton donor. 298-304 (TTTGRKR) contacts substrate. GTP is bound by residues Arg-304, 330-332 (KLD), and 412-414 (SLG).

This sequence belongs to the adenylosuccinate synthetase family. In terms of assembly, homodimer. Mg(2+) serves as cofactor.

The protein localises to the cytoplasm. It catalyses the reaction IMP + L-aspartate + GTP = N(6)-(1,2-dicarboxyethyl)-AMP + GDP + phosphate + 2 H(+). It functions in the pathway purine metabolism; AMP biosynthesis via de novo pathway; AMP from IMP: step 1/2. Plays an important role in the de novo pathway of purine nucleotide biosynthesis. Catalyzes the first committed step in the biosynthesis of AMP from IMP. The polypeptide is Adenylosuccinate synthetase (Trichodesmium erythraeum (strain IMS101)).